A 719-amino-acid polypeptide reads, in one-letter code: Protein psiI (719 aa).

Residues 1–19 (MKIIFNLLILFSLVNFINS) form the signal peptide. At 20–658 (QSTTQATTLK…ICQTGAIVST (639 aa)) the chain is on the extracellular side. N62, N105, N118, N151, N315, N379, N454, N488, N500, N538, N592, and N629 each carry an N-linked (GlcNAc...) asparagine glycan. The PA14 domain maps to 119–261 (LTLNPSTGTY…YDYCGVCYGD (143 aa)). The helical transmembrane segment at 659–679 (AVVASVVVVGAVVLGAAIFAG) threads the bilayer. The Cytoplasmic segment spans residues 680 to 719 (KKGYDHWKANQGQVFASSNANPLYQQSNNGGENALFEAPQ).

It belongs to the prespore-cell-inducing factor family.

Its subcellular location is the membrane. The polypeptide is Protein psiI (psiI) (Dictyostelium discoideum (Social amoeba)).